The following is a 746-amino-acid chain: Exostosin-1 (746 aa).

Topologically, residues 1-7 (MQAKKRY) are cytoplasmic. The helical; Signal-anchor for type II membrane protein transmembrane segment at 8–28 (FILLSAGSCLALLFYFGGVQF) threads the bilayer. The Lumenal portion of the chain corresponds to 29–746 (RASRSHSRRE…RKKYRDIERL (718 aa)). An N-linked (GlcNAc...) asparagine glycan is attached at Asn89. Intrachain disulfides connect Cys98/Cys103 and Cys109/Cys152. 2 residues coordinate a protein: Leu166 and Tyr203. 4 residues coordinate UDP: Lys267, Lys269, Tyr271, and Arg280. The cysteines at positions 298 and 312 are disulfide-linked. Position 300 (His300) interacts with a protein. UDP-binding residues include Tyr319 and Tyr324. Asn330 carries N-linked (GlcNAc...) asparagine glycosylation. Cystine bridges form between Cys334-Cys355 and Cys652-Cys704. The UDP site is built by Arg346 and Glu349.

It belongs to the glycosyltransferase 47 family. Part of the heparan sulfate polymerase, a dimeric complex composed of EXT1 and EXT2. Could also form homooligomeric complexes. Interacts with NDST1. In terms of processing, N-glycosylated.

The protein localises to the golgi apparatus membrane. It is found in the golgi apparatus. It localises to the cis-Golgi network membrane. Its subcellular location is the endoplasmic reticulum membrane. The catalysed reaction is 3-O-{alpha-D-GlcNAc-[(1-&gt;4)-beta-D-GlcA-(1-&gt;4)-alpha-D-GlcNAc](n)-(1-&gt;4)-beta-D-GlcA-(1-&gt;3)-beta-D-Gal-(1-&gt;3)-beta-D-Gal-(1-&gt;4)-beta-D-Xyl}-L-seryl-[protein] + UDP-alpha-D-glucuronate = 3-O-{[(1-&gt;4)-beta-D-GlcA-(1-&gt;4)-alpha-D-GlcNAc](n+1)-(1-&gt;4)-beta-D-GlcA-(1-&gt;3)-beta-D-Gal-(1-&gt;3)-beta-D-Gal-(1-&gt;4)-beta-D-Xyl}-L-seryl-[protein] + UDP + H(+). Its pathway is protein modification; protein glycosylation. Functionally, glycosyltransferase forming with EXT2 the heterodimeric heparan sulfate polymerase which catalyzes the elongation of the heparan sulfate glycan backbone. Glycan backbone extension consists in the alternating transfer of (1-&gt;4)-beta-D-GlcA and (1-&gt;4)-alpha-D-GlcNAc residues from their respective UDP-sugar donors. Both EXT1 and EXT2 are required for the full activity of the polymerase since EXT1 bears the N-acetylglucosaminyl-proteoglycan 4-beta-glucuronosyltransferase activity within the complex while EXT2 carries the glucuronosyl-N-acetylglucosaminyl-proteoglycan 4-alpha-N-acetylglucosaminyltransferase activity. Heparan sulfate proteoglycans are ubiquitous components of the extracellular matrix and play an important role in tissue homeostasis and signaling. The polypeptide is Exostosin-1 (Mus musculus (Mouse)).